The primary structure comprises 456 residues: uncharacterized protein (456 aa).

Composition is skewed to basic and acidic residues over residues 181-210 and 217-231; these read DQRKESIVNDERKKNPEFREKPDKNEDKKV and KEIENKGIDHEENEE. The disordered stretch occupies residues 181–231; the sequence is DQRKESIVNDERKKNPEFREKPDKNEDKKVKPPPSLKEIENKGIDHEENEE. Residues 216–248 are a coiled coil; the sequence is LKEIENKGIDHEENEEDKKRELMFKLQLLQKQY. Residues 347–365 form a helical membrane-spanning segment; sequence LALAILFNAVWFIAAKMIM. The span at 383 to 407 shows a compositional bias: polar residues; the sequence is NKSGTTPNSVSPRTWGNSKSPQSEF. The segment at 383-456 is disordered; sequence NKSGTTPNSV…MREQGIETLK (74 aa). Over residues 441-456 the composition is skewed to basic and acidic residues; the sequence is DESRREMREQGIETLK.

Belongs to the IIV-6 067R family.

It localises to the membrane. This is an uncharacterized protein from Invertebrate iridescent virus 6 (IIV-6).